A 158-amino-acid chain; its full sequence is 6,7-dimethyl-8-ribityllumazine synthase (158 aa).

Residues Phe22, 57-59 (AFE), and 81-83 (AVI) each bind 5-amino-6-(D-ribitylamino)uracil. Residue 86 to 87 (GT) participates in (2S)-2-hydroxy-3-oxobutyl phosphate binding. His89 (proton donor) is an active-site residue. A 5-amino-6-(D-ribitylamino)uracil-binding site is contributed by Phe114. A (2S)-2-hydroxy-3-oxobutyl phosphate-binding site is contributed by Arg128.

This sequence belongs to the DMRL synthase family. Forms an icosahedral capsid composed of 60 subunits, arranged as a dodecamer of pentamers.

It catalyses the reaction (2S)-2-hydroxy-3-oxobutyl phosphate + 5-amino-6-(D-ribitylamino)uracil = 6,7-dimethyl-8-(1-D-ribityl)lumazine + phosphate + 2 H2O + H(+). Its pathway is cofactor biosynthesis; riboflavin biosynthesis; riboflavin from 2-hydroxy-3-oxobutyl phosphate and 5-amino-6-(D-ribitylamino)uracil: step 1/2. Catalyzes the formation of 6,7-dimethyl-8-ribityllumazine by condensation of 5-amino-6-(D-ribitylamino)uracil with 3,4-dihydroxy-2-butanone 4-phosphate. This is the penultimate step in the biosynthesis of riboflavin. The polypeptide is 6,7-dimethyl-8-ribityllumazine synthase (Shewanella amazonensis (strain ATCC BAA-1098 / SB2B)).